The primary structure comprises 432 residues: Putative O-antigen transporter (432 aa).

The next 12 membrane-spanning stretches (helical) occupy residues 14–34, 47–67, 90–110, 134–154, 164–184, 189–209, 234–254, 271–291, 305–325, 334–354, 376–396, and 400–420; these read IIAA…LVSV, AVFT…IGIG, AAVH…FFLS, FIAS…KILF, IINA…HYLM, ITFA…IYIS, GFLI…IVMS, IFGL…PVCA, IIFL…LFIY, IIAN…LAVY, ILWL…WYFA, and GIVG…FWGL.

It is found in the cell inner membrane. The protein operates within bacterial outer membrane biogenesis; LPS O-antigen biosynthesis. Its function is as follows. May be involved in the translocation process of the nascent O-polysaccharide molecules and/or its ligation to lipid A core units. The chain is Putative O-antigen transporter (rfbX) from Salmonella typhi.